Here is a 303-residue protein sequence, read N- to C-terminus: UPF0282 protein PAE3680 (303 aa).

This sequence belongs to the UPF0282 family.

The sequence is that of UPF0282 protein PAE3680 from Pyrobaculum aerophilum (strain ATCC 51768 / DSM 7523 / JCM 9630 / CIP 104966 / NBRC 100827 / IM2).